Consider the following 201-residue polypeptide: Large ribosomal subunit protein eL15A (201 aa).

Residues 161–182 (SRGLTSIGKKSRGIGKGHRFNN) form a disordered region. A compositionally biased stretch (basic residues) spans 169 to 179 (KKSRGIGKGHR).

The protein belongs to the eukaryotic ribosomal protein eL15 family. As to quaternary structure, component of the large ribosomal subunit (LSU). Mature yeast ribosomes consist of a small (40S) and a large (60S) subunit. The 40S small subunit contains 1 molecule of ribosomal RNA (18S rRNA) and at least 33 different proteins. The large 60S subunit contains 3 rRNA molecules (25S, 5.8S and 5S rRNA) and at least 46 different proteins.

It is found in the cytoplasm. Its subcellular location is the nucleus. It localises to the nucleolus. Component of the ribosome, a large ribonucleoprotein complex responsible for the synthesis of proteins in the cell. The small ribosomal subunit (SSU) binds messenger RNAs (mRNAs) and translates the encoded message by selecting cognate aminoacyl-transfer RNA (tRNA) molecules. The large subunit (LSU) contains the ribosomal catalytic site termed the peptidyl transferase center (PTC), which catalyzes the formation of peptide bonds, thereby polymerizing the amino acids delivered by tRNAs into a polypeptide chain. The nascent polypeptides leave the ribosome through a tunnel in the LSU and interact with protein factors that function in enzymatic processing, targeting, and the membrane insertion of nascent chains at the exit of the ribosomal tunnel. The polypeptide is Large ribosomal subunit protein eL15A (rpl15) (Schizosaccharomyces pombe (strain 972 / ATCC 24843) (Fission yeast)).